Reading from the N-terminus, the 570-residue chain is Periplasmic trehalase (570 aa).

An N-terminal signal peptide occupies residues 1–34 (MITPALRHSGTLSFAIKLTVASTLLTFASLSAHA). Substrate contacts are provided by residues R157, 164 to 165 (WD), N201, 210 to 212 (RSQ), 282 to 284 (RPE), and G315. Catalysis depends on proton donor/acceptor residues D317 and E501. Substrate is bound at residue E516. Residues 542–570 (KPCDSVPATRPAAPGASQPAPQKQVETTP) form a disordered region. Residues 552–570 (PAAPGASQPAPQKQVETTP) are compositionally biased toward low complexity.

Belongs to the glycosyl hydrolase 37 family. Monomer.

The protein localises to the periplasm. The catalysed reaction is alpha,alpha-trehalose + H2O = alpha-D-glucose + beta-D-glucose. Its function is as follows. Provides the cells with the ability to utilize trehalose at high osmolarity by splitting it into glucose molecules that can subsequently be taken up by the phosphotransferase-mediated uptake system. This is Periplasmic trehalase from Citrobacter koseri (strain ATCC BAA-895 / CDC 4225-83 / SGSC4696).